Here is a 313-residue protein sequence, read N- to C-terminus: D-alanine--D-alanine ligase (313 aa).

One can recognise an ATP-grasp domain in the interval 108-308 (KLVWQQLGIP…YQELVVGVLA (201 aa)). ATP is bound at residue 138 to 193 (VAKLGLPLFVKPASEGSSVAVIKVKSADALPAALIEAVKYDKIVVVEKSVEGGGEY). 3 residues coordinate Mg(2+): Asp-262, Glu-275, and Asn-277.

The protein belongs to the D-alanine--D-alanine ligase family. Requires Mg(2+) as cofactor. It depends on Mn(2+) as a cofactor.

It localises to the cytoplasm. It catalyses the reaction 2 D-alanine + ATP = D-alanyl-D-alanine + ADP + phosphate + H(+). The protein operates within cell wall biogenesis; peptidoglycan biosynthesis. Functionally, cell wall formation. In Paraburkholderia phytofirmans (strain DSM 17436 / LMG 22146 / PsJN) (Burkholderia phytofirmans), this protein is D-alanine--D-alanine ligase.